The following is a 64-amino-acid chain: Large ribosomal subunit protein bL33 (64 aa).

Over residues 16 to 25 (EARTSSEPRR) the composition is skewed to basic and acidic residues. Residues 16 to 39 (EARTSSEPRRSNGISRYTTEKNKR) are disordered.

Belongs to the bacterial ribosomal protein bL33 family.

The polypeptide is Large ribosomal subunit protein bL33 (Prochlorococcus marinus (strain MIT 9515)).